The primary structure comprises 501 residues: Glycerol kinase (501 aa).

Threonine 11 is a binding site for ADP. The ATP site is built by threonine 11, threonine 12, and serine 13. Position 11 (threonine 11) interacts with sn-glycerol 3-phosphate. Residue arginine 15 coordinates ADP. Positions 81, 82, 133, and 242 each coordinate sn-glycerol 3-phosphate. 5 residues coordinate glycerol: arginine 81, glutamate 82, tyrosine 133, aspartate 242, and glutamine 243. The ADP site is built by threonine 264 and glycine 307. ATP contacts are provided by threonine 264, glycine 307, glutamine 311, and glycine 409. 2 residues coordinate ADP: glycine 409 and asparagine 413.

This sequence belongs to the FGGY kinase family.

It catalyses the reaction glycerol + ATP = sn-glycerol 3-phosphate + ADP + H(+). The protein operates within polyol metabolism; glycerol degradation via glycerol kinase pathway; sn-glycerol 3-phosphate from glycerol: step 1/1. Its activity is regulated as follows. Inhibited by fructose 1,6-bisphosphate (FBP). Key enzyme in the regulation of glycerol uptake and metabolism. Catalyzes the phosphorylation of glycerol to yield sn-glycerol 3-phosphate. This chain is Glycerol kinase, found in Borreliella afzelii (strain PKo) (Borrelia afzelii).